A 291-amino-acid chain; its full sequence is Phosphoribosylaminoimidazole-succinocarboxamide synthase (291 aa).

This sequence belongs to the SAICAR synthetase family.

The catalysed reaction is 5-amino-1-(5-phospho-D-ribosyl)imidazole-4-carboxylate + L-aspartate + ATP = (2S)-2-[5-amino-1-(5-phospho-beta-D-ribosyl)imidazole-4-carboxamido]succinate + ADP + phosphate + 2 H(+). Its pathway is purine metabolism; IMP biosynthesis via de novo pathway; 5-amino-1-(5-phospho-D-ribosyl)imidazole-4-carboxamide from 5-amino-1-(5-phospho-D-ribosyl)imidazole-4-carboxylate: step 1/2. The protein is Phosphoribosylaminoimidazole-succinocarboxamide synthase (ADE1) of Candida maltosa (Yeast).